A 663-amino-acid chain; its full sequence is Bifunctional polymyxin resistance protein ArnA (663 aa).

Residues 1 to 307 form a formyltransferase ArnAFT region; it reads MSSKAVVFAY…ELGLVDGSVL (307 aa). Catalysis depends on histidine 106, which acts as the Proton donor; for formyltransferase activity. (6R)-10-formyltetrahydrofolate contacts are provided by residues arginine 116 and 138 to 142; that span reads VKRAD. The interval 317–663 is dehydrogenase ArnADH; it reads RRTRVLILGV…EAMLEIADKK (347 aa). NAD(+) contacts are provided by residues aspartate 350 and 371-372; that span reads DI. UDP-alpha-D-glucuronate-binding positions include alanine 396, tyrosine 401, and 435–436; that span reads TS. Glutamate 437 (proton acceptor; for decarboxylase activity) is an active-site residue. UDP-alpha-D-glucuronate contacts are provided by residues arginine 463, asparagine 494, 528-537, and tyrosine 615; that span reads RLFDGGEQKR. Arginine 621 serves as the catalytic Proton donor; for decarboxylase activity.

In the N-terminal section; belongs to the Fmt family. UDP-L-Ara4N formyltransferase subfamily. It in the C-terminal section; belongs to the NAD(P)-dependent epimerase/dehydratase family. UDP-glucuronic acid decarboxylase subfamily. Homohexamer, formed by a dimer of trimers.

It catalyses the reaction UDP-alpha-D-glucuronate + NAD(+) = UDP-beta-L-threo-pentopyranos-4-ulose + CO2 + NADH. The enzyme catalyses UDP-4-amino-4-deoxy-beta-L-arabinose + (6R)-10-formyltetrahydrofolate = UDP-4-deoxy-4-formamido-beta-L-arabinose + (6S)-5,6,7,8-tetrahydrofolate + H(+). It participates in nucleotide-sugar biosynthesis; UDP-4-deoxy-4-formamido-beta-L-arabinose biosynthesis; UDP-4-deoxy-4-formamido-beta-L-arabinose from UDP-alpha-D-glucuronate: step 1/3. It functions in the pathway nucleotide-sugar biosynthesis; UDP-4-deoxy-4-formamido-beta-L-arabinose biosynthesis; UDP-4-deoxy-4-formamido-beta-L-arabinose from UDP-alpha-D-glucuronate: step 3/3. Its pathway is bacterial outer membrane biogenesis; lipopolysaccharide biosynthesis. In terms of biological role, bifunctional enzyme that catalyzes the oxidative decarboxylation of UDP-glucuronic acid (UDP-GlcUA) to UDP-4-keto-arabinose (UDP-Ara4O) and the addition of a formyl group to UDP-4-amino-4-deoxy-L-arabinose (UDP-L-Ara4N) to form UDP-L-4-formamido-arabinose (UDP-L-Ara4FN). The modified arabinose is attached to lipid A and is required for resistance to polymyxin and cationic antimicrobial peptides. In Pseudomonas fluorescens (strain SBW25), this protein is Bifunctional polymyxin resistance protein ArnA.